The primary structure comprises 247 residues: ATP synthase subunit a, chloroplastic (247 aa).

5 helical membrane passes run 38–58 (QVLI…AIAV), 95–115 (VPFI…GALL), 134–154 (INTT…AGLT), 199–219 (LVVV…VMFL), and 220–240 (GLFT…AYIG).

It belongs to the ATPase A chain family. F-type ATPases have 2 components, CF(1) - the catalytic core - and CF(0) - the membrane proton channel. CF(1) has five subunits: alpha(3), beta(3), gamma(1), delta(1), epsilon(1). CF(0) has four main subunits: a, b, b' and c.

The protein localises to the plastid. Its subcellular location is the chloroplast thylakoid membrane. Its function is as follows. Key component of the proton channel; it plays a direct role in the translocation of protons across the membrane. The chain is ATP synthase subunit a, chloroplastic from Illicium oligandrum (Star anise).